The chain runs to 243 residues: Pyridoxine 5'-phosphate synthase (243 aa).

Asn-9 provides a ligand contact to 3-amino-2-oxopropyl phosphate. 11–12 serves as a coordination point for 1-deoxy-D-xylulose 5-phosphate; that stretch reads DH. A 3-amino-2-oxopropyl phosphate-binding site is contributed by Arg-20. The active-site Proton acceptor is His-45. Residues Arg-47 and His-52 each coordinate 1-deoxy-D-xylulose 5-phosphate. Glu-72 serves as the catalytic Proton acceptor. Thr-102 serves as a coordination point for 1-deoxy-D-xylulose 5-phosphate. Catalysis depends on His-193, which acts as the Proton donor. Residues Gly-194 and 215 to 216 contribute to the 3-amino-2-oxopropyl phosphate site; that span reads GH.

The protein belongs to the PNP synthase family. Homooctamer; tetramer of dimers.

The protein localises to the cytoplasm. The enzyme catalyses 3-amino-2-oxopropyl phosphate + 1-deoxy-D-xylulose 5-phosphate = pyridoxine 5'-phosphate + phosphate + 2 H2O + H(+). It functions in the pathway cofactor biosynthesis; pyridoxine 5'-phosphate biosynthesis; pyridoxine 5'-phosphate from D-erythrose 4-phosphate: step 5/5. Its function is as follows. Catalyzes the complicated ring closure reaction between the two acyclic compounds 1-deoxy-D-xylulose-5-phosphate (DXP) and 3-amino-2-oxopropyl phosphate (1-amino-acetone-3-phosphate or AAP) to form pyridoxine 5'-phosphate (PNP) and inorganic phosphate. The protein is Pyridoxine 5'-phosphate synthase of Shigella dysenteriae serotype 1 (strain Sd197).